The chain runs to 146 residues: MTKKIEEKIGGVIESLGYLLYDVSLVKENEQHVLRVSLKNPNGAVSLDICQQVSEIISPLLDVCDFIQDAYILEVSSMGLERTLKTPKHFKLSLGEKVEVKLTNKESFQAVLKDANDLSADFELEDHAIKSVEYKDLKKVKTLFEW.

Belongs to the RimP family.

The protein localises to the cytoplasm. Its function is as follows. Required for maturation of 30S ribosomal subunits. The polypeptide is Ribosome maturation factor RimP (Helicobacter pylori (strain ATCC 700392 / 26695) (Campylobacter pylori)).